The primary structure comprises 298 residues: N-acetylmuramic acid 6-phosphate etherase (298 aa).

The SIS domain maps to 55-218; that stretch reads IHAQVSGGGR…STGLMIKSGK (164 aa). Glutamate 83 acts as the Proton donor in catalysis. Residue glutamate 114 is part of the active site.

The protein belongs to the GCKR-like family. MurNAc-6-P etherase subfamily. Homodimer.

It catalyses the reaction N-acetyl-D-muramate 6-phosphate + H2O = N-acetyl-D-glucosamine 6-phosphate + (R)-lactate. Its pathway is amino-sugar metabolism; 1,6-anhydro-N-acetylmuramate degradation. It participates in amino-sugar metabolism; N-acetylmuramate degradation. The protein operates within cell wall biogenesis; peptidoglycan recycling. Functionally, specifically catalyzes the cleavage of the D-lactyl ether substituent of MurNAc 6-phosphate, producing GlcNAc 6-phosphate and D-lactate. Together with AnmK, is also required for the utilization of anhydro-N-acetylmuramic acid (anhMurNAc) either imported from the medium or derived from its own cell wall murein, and thus plays a role in cell wall recycling. The protein is N-acetylmuramic acid 6-phosphate etherase of Shigella dysenteriae serotype 1 (strain Sd197).